Consider the following 615-residue polypeptide: UvrABC system protein C (615 aa).

The GIY-YIG domain maps to glutamate 12–valine 91. The region spanning aspartate 203–threonine 238 is the UVR domain.

Belongs to the UvrC family. As to quaternary structure, interacts with UvrB in an incision complex.

It localises to the cytoplasm. Its function is as follows. The UvrABC repair system catalyzes the recognition and processing of DNA lesions. UvrC both incises the 5' and 3' sides of the lesion. The N-terminal half is responsible for the 3' incision and the C-terminal half is responsible for the 5' incision. The protein is UvrABC system protein C of Thermoanaerobacter pseudethanolicus (strain ATCC 33223 / 39E) (Clostridium thermohydrosulfuricum).